A 123-amino-acid chain; its full sequence is Glycophorin-B (123 aa).

A signal peptide spans 1-19 (MYGKIIFVLLLSEIVSISA). Residues 93-113 (VVIILIILCVMAGVIGTILLI) form a helical membrane-spanning segment.

Belongs to the glycophorin-A family. As to quaternary structure, component of the ankyrin-1 complex in the erythrocyte, composed of ANK1, RHCE, RHAG, SLC4A1, EPB42, GYPA, GYPB and AQP1. Interacts (via the N-terminal) with RHAG; this interaction bridges the (RHAG)2(RHCE) heterotrimer with the SLC4A1 Band 3 I dimer complexed with GYPA. In terms of processing, the N-terminal extracellular domain is heavily glycosylated on serine and threonine residues.

The protein resides in the cell membrane. In terms of biological role, component of the ankyrin-1 complex, a multiprotein complex involved in the stability and shape of the erythrocyte membrane. The protein is Glycophorin-B of Pan troglodytes (Chimpanzee).